The sequence spans 90 residues: uncharacterized protein (90 aa).

Positions 25–90 are disordered; the sequence is GEAAYNSPTN…PPIAPPPILD (66 aa). 2 stretches are compositionally biased toward polar residues: residues 30-54 and 65-79; these read NSPT…TESV and NDQT…SNVN.

This is an uncharacterized protein from Bacillus subtilis (strain 168).